The following is a 199-amino-acid chain: GTP-binding protein Di-Ras2 (199 aa).

Residues 14–21, 33–39, 61–65, and 121–124 contribute to the GTP site; these read GAGGVGKS, RESYIPT, DTTGS, and NKCD. At serine 35 the chain carries Phosphoserine. The short motif at 36-44 is the Effector region element; sequence YIPTVEDTY. Serine 126 carries the phosphoserine modification. 152–153 lines the GTP pocket; the sequence is AK. Cysteine 196 is modified (cysteine methyl ester). A lipid anchor (S-geranylgeranyl cysteine) is attached at cysteine 196. A propeptide spans 197 to 199 (removed in mature form); sequence VIM.

This sequence belongs to the small GTPase superfamily. Di-Ras family. Ubiquitinated by the ECS(ASB11) complex via 'Lys-11'-linked ubiquitin chains, leading to its degradation by the proteasome.

It is found in the cell membrane. The catalysed reaction is GTP + H2O = GDP + phosphate + H(+). Displays low GTPase activity and exists predominantly in the GTP-bound form. This is GTP-binding protein Di-Ras2 (DIRAS2) from Macaca fascicularis (Crab-eating macaque).